A 629-amino-acid polypeptide reads, in one-letter code: tRNA uridine 5-carboxymethylaminomethyl modification enzyme MnmG (629 aa).

G13–G18 lines the FAD pocket. Residue G273 to F287 coordinates NAD(+).

The protein belongs to the MnmG family. In terms of assembly, homodimer. Heterotetramer of two MnmE and two MnmG subunits. It depends on FAD as a cofactor.

Its subcellular location is the cytoplasm. Functionally, NAD-binding protein involved in the addition of a carboxymethylaminomethyl (cmnm) group at the wobble position (U34) of certain tRNAs, forming tRNA-cmnm(5)s(2)U34. The chain is tRNA uridine 5-carboxymethylaminomethyl modification enzyme MnmG from Shewanella baltica (strain OS195).